Consider the following 87-residue polypeptide: Small ribosomal subunit protein bS16 (87 aa).

It belongs to the bacterial ribosomal protein bS16 family.

The sequence is that of Small ribosomal subunit protein bS16 from Desulfatibacillum aliphaticivorans.